Consider the following 345-residue polypeptide: Anthranilate phosphoribosyltransferase (345 aa).

5-phospho-alpha-D-ribose 1-diphosphate is bound by residues G80, G83–D84, T88, N90–T93, K108–S116, and S120. Residue G80 coordinates anthranilate. Residue S92 participates in Mg(2+) binding. An anthranilate-binding site is contributed by N111. R166 serves as a coordination point for anthranilate. D225 and E226 together coordinate Mg(2+).

It belongs to the anthranilate phosphoribosyltransferase family. Homodimer. The cofactor is Mg(2+).

The enzyme catalyses N-(5-phospho-beta-D-ribosyl)anthranilate + diphosphate = 5-phospho-alpha-D-ribose 1-diphosphate + anthranilate. Its pathway is amino-acid biosynthesis; L-tryptophan biosynthesis; L-tryptophan from chorismate: step 2/5. Its function is as follows. Catalyzes the transfer of the phosphoribosyl group of 5-phosphorylribose-1-pyrophosphate (PRPP) to anthranilate to yield N-(5'-phosphoribosyl)-anthranilate (PRA). The sequence is that of Anthranilate phosphoribosyltransferase from Desulforamulus reducens (strain ATCC BAA-1160 / DSM 100696 / MI-1) (Desulfotomaculum reducens).